The primary structure comprises 417 residues: MVLAQRQKEELNRAIADYLFANGYVKALNAFREESQLAGENDRKYDGLLEKKWTSVIRLQKKVMDLEAKLNEAEKEFQSMQNAIGFGVAGAAPGSGLSDRSDRRDVDAIPRPPAKFTLTGHRSPITRVLFHPHYNVFVSASEDASIKVWDYETGEFEHTLKGHTDSVQDVAFDPSGKFLASCSADMQVKLWDFTIYQCIKTLTGHDHNVSSVAFLPSGDFLVSASRDKTIKMWEVSTGYCTKTFIGHTEWIRSVRPSPEGNLLASCSNDHTIRIWSVESRECQVVLRGHEHVVECIAWASHPQNLNSLPSSMNSSLLLVSGSRDRTIRFWDVNIGICLFVLIGHDNWVRQLVFHPHGRLLLSASDDKTIRVWDLKNRRCHKTLNAHSHFVTSLDVNRLAPYAITGSVDQTIHIWDCR.

Positions 7–39 (QKEELNRAIADYLFANGYVKALNAFREESQLAG) constitute a LisH domain. Residues 54-86 (TSVIRLQKKVMDLEAKLNEAEKEFQSMQNAIGF) are a coiled coil. WD repeat units lie at residues 120-159 (GHRS…FEHT), 162-203 (GHTD…KTLT), 204-243 (GHDH…CTKT), 246-285 (GHTE…CQVV), 288-340 (GHEH…CLFV), 343-382 (GHDN…CHKT), and 385-417 (AHSH…WDCR).

Belongs to the WD repeat LIS1/nudF family.

It is found in the cytoplasm. Its subcellular location is the cytoskeleton. The protein resides in the microtubule organizing center. The protein localises to the centrosome. Functionally, positively regulates the activity of the minus-end directed microtubule motor protein dynein. May enhance dynein-mediated microtubule sliding by targeting dynein to the microtubule plus end. Required for several dynein- and microtubule-dependent processes. The chain is Lissencephaly-1 homolog from Schistosoma mansoni (Blood fluke).